Reading from the N-terminus, the 399-residue chain is Acetate kinase (399 aa).

Asn10 lines the Mg(2+) pocket. ATP is bound at residue Lys17. Arg91 serves as a coordination point for substrate. The Proton donor/acceptor role is filled by Asp150. ATP-binding positions include 210 to 214 (HLGNG), 285 to 287 (DFR), and 333 to 337 (GIGEN). Glu387 serves as a coordination point for Mg(2+).

This sequence belongs to the acetokinase family. Homodimer. The cofactor is Mg(2+). Requires Mn(2+) as cofactor.

The protein localises to the cytoplasm. It carries out the reaction acetate + ATP = acetyl phosphate + ADP. The protein operates within metabolic intermediate biosynthesis; acetyl-CoA biosynthesis; acetyl-CoA from acetate: step 1/2. Its function is as follows. Catalyzes the formation of acetyl phosphate from acetate and ATP. Can also catalyze the reverse reaction. This Wigglesworthia glossinidia brevipalpis protein is Acetate kinase.